We begin with the raw amino-acid sequence, 532 residues long: Variant surface glycoprotein ILTAT 1.23 (532 aa).

Positions 1–23 are cleaved as a signal peptide; the sequence is MFKNINAAVLLLILSTRNDYANA. Asn-66 is a glycosylation site (N-linked (GlcNAc...) asparagine). Disordered stretches follow at residues 79 to 107 and 408 to 504; these read APKK…RNHA and MQAG…DQDK. Residue Asn-419 is glycosylated (N-linked (GlcNAc...) asparagine). The segment covering 427-445 has biased composition (basic and acidic residues); sequence CKWEEKDGKDGKCVADDSK. The span at 450–470 shows a compositional bias: low complexity; the sequence is GNAPAGAGDGTAGTTTTPNCA. Composition is skewed to basic and acidic residues over residues 472–484 and 494–504; these read HTDK…ENKG and KGKEGESDQDK. The N-linked (GlcNAc...) asparagine glycan is linked to Asn-509. Asn-509 is lipidated: GPI-anchor amidated asparagine. Residues 510–532 constitute a propeptide, removed in mature form; that stretch reads GSFLAKKKFALSVVSAAFTALLF.

Its subcellular location is the cell membrane. VSG forms a coat on the surface of the parasite. The trypanosome evades the immune response of the host by expressing a series of antigenically distinct VSGs from an estimated 1000 VSG genes. The polypeptide is Variant surface glycoprotein ILTAT 1.23 (Trypanosoma brucei brucei).